Here is a 182-residue protein sequence, read N- to C-terminus: MTPTQNVPEDRIQIGQLRSAYGLNGWLWVYSNTEPMSNMFDYLPWFIETKAGWQTVDVKRWKPHGKGLVVSLKNVSDRNAAESLIGSTIWVAKSQLPKTDVDEYYWSDLKGLTVLGLDEEEQEVNLGQIHELFETGANDVMVVRATADSVDAEERMIPWHKDVVQRVDLEAGRIYVNWGVDY.

The PRC barrel domain occupies 101–182 (VDEYYWSDLK…RIYVNWGVDY (82 aa)).

Belongs to the RimM family. Binds ribosomal protein uS19.

It localises to the cytoplasm. Functionally, an accessory protein needed during the final step in the assembly of 30S ribosomal subunit, possibly for assembly of the head region. Essential for efficient processing of 16S rRNA. May be needed both before and after RbfA during the maturation of 16S rRNA. It has affinity for free ribosomal 30S subunits but not for 70S ribosomes. The sequence is that of Ribosome maturation factor RimM from Acinetobacter baylyi (strain ATCC 33305 / BD413 / ADP1).